The sequence spans 309 residues: Succinate--CoA ligase [ADP-forming] subunit alpha-2, mitochondrial (309 aa).

Residues Met1–Asn9 constitute a hydrogenosome transit peptide. CoA contacts are provided by residues Lys54 and Ile107–Glu109. Substrate is bound at residue Tyr171. The Tele-phosphohistidine intermediate role is filled by His262.

The protein belongs to the succinate/malate CoA ligase alpha subunit family. As to quaternary structure, heterodimer of an alpha and a beta subunit.

The protein resides in the hydrogenosome lumen. It catalyses the reaction succinate + ATP + CoA = succinyl-CoA + ADP + phosphate. It participates in carbohydrate metabolism; tricarboxylic acid cycle; succinate from succinyl-CoA (ligase route): step 1/1. Functionally, succinyl-CoA synthetase functions in the citric acid cycle (TCA), coupling the hydrolysis of succinyl-CoA to the synthesis of ATP and thus represents the only step of substrate-level phosphorylation in the TCA. The alpha subunit of the enzyme binds the substrates coenzyme A and phosphate, while succinate binding and nucleotide specificity is provided by the beta subunit. The sequence is that of Succinate--CoA ligase [ADP-forming] subunit alpha-2, mitochondrial (ALPHA-SCS2) from Trichomonas vaginalis.